Consider the following 1356-residue polypeptide: Vegetative incompatibility protein HET-E-1 (1356 aa).

Positions R294 to K629 constitute an NACHT domain. G300 to T307 serves as a coordination point for GTP. WD repeat units follow at residues G839–D869, G881–D911, G923–D953, G965–D995, G1007–D1037, G1049–D1079, G1091–D1121, G1133–D1163, G1175–D1205, and G1217–D1247.

Functionally, responsible for vegetative incompatibility through specific interactions with different alleles of the unlinked gene, het-c. The sequence is that of Vegetative incompatibility protein HET-E-1 (HET-E1) from Podospora anserina (Pleurage anserina).